The following is a 32-amino-acid chain: Growth hormone-related protein 4 (32 aa).

A disulfide bridge connects residues cysteine 4 and cysteine 11.

Belongs to the somatotropin/prolactin family. Glycosylated. As to expression, placental basal zone cells.

The protein localises to the secreted. In Rattus norvegicus (Rat), this protein is Growth hormone-related protein 4.